The primary structure comprises 284 residues: Release factor glutamine methyltransferase (284 aa).

S-adenosyl-L-methionine-binding positions include 123 to 127, D146, W174, and N189; that span reads GTGTG. 189–192 serves as a coordination point for substrate; it reads NPPY.

This sequence belongs to the protein N5-glutamine methyltransferase family. PrmC subfamily.

The catalysed reaction is L-glutaminyl-[peptide chain release factor] + S-adenosyl-L-methionine = N(5)-methyl-L-glutaminyl-[peptide chain release factor] + S-adenosyl-L-homocysteine + H(+). Methylates the class 1 translation termination release factors RF1/PrfA and RF2/PrfB on the glutamine residue of the universally conserved GGQ motif. This chain is Release factor glutamine methyltransferase, found in Francisella tularensis subsp. tularensis (strain SCHU S4 / Schu 4).